The sequence spans 251 residues: Ubiquinone/menaquinone biosynthesis C-methyltransferase UbiE (251 aa).

Residues Thr-74, Asp-95, 123-124 (NA), and Ser-140 each bind S-adenosyl-L-methionine.

Belongs to the class I-like SAM-binding methyltransferase superfamily. MenG/UbiE family.

The catalysed reaction is a 2-demethylmenaquinol + S-adenosyl-L-methionine = a menaquinol + S-adenosyl-L-homocysteine + H(+). It catalyses the reaction a 2-methoxy-6-(all-trans-polyprenyl)benzene-1,4-diol + S-adenosyl-L-methionine = a 5-methoxy-2-methyl-3-(all-trans-polyprenyl)benzene-1,4-diol + S-adenosyl-L-homocysteine + H(+). The protein operates within quinol/quinone metabolism; menaquinone biosynthesis; menaquinol from 1,4-dihydroxy-2-naphthoate: step 2/2. It functions in the pathway cofactor biosynthesis; ubiquinone biosynthesis. In terms of biological role, methyltransferase required for the conversion of demethylmenaquinol (DMKH2) to menaquinol (MKH2) and the conversion of 2-polyprenyl-6-methoxy-1,4-benzoquinol (DDMQH2) to 2-polyprenyl-3-methyl-6-methoxy-1,4-benzoquinol (DMQH2). In Klebsiella pneumoniae (strain 342), this protein is Ubiquinone/menaquinone biosynthesis C-methyltransferase UbiE.